The following is a 243-amino-acid chain: MPQLALIRHGQSEWNLQNRFTGWVDVDLTDEGVAQARQSGELLAKAGFEPTHAFVSVLKRAIKTLNFTLEGLDRLWIPVDKSWRLNERHYGALAGLDKNETRAKHGDEQVKIWRRSFDTPPPPVATDHAYHPLNDHRYADVPRELLPASESLKSTLDRVEPYWSSSIQPRLAAGETLIVAAHGNSLRALVKLLFKVSDPDIMEVEVPTGNPLLIDLEDDGITLRSARYLDPVRAKPLPPLPGA.

Residues 8–15 (RHGQSEWN), 21–22 (TG), Arg60, 87–90 (ERHY), Lys98, 114–115 (RR), and 183–184 (GN) contribute to the substrate site. His9 serves as the catalytic Tele-phosphohistidine intermediate. Glu87 serves as the catalytic Proton donor/acceptor.

The protein belongs to the phosphoglycerate mutase family. BPG-dependent PGAM subfamily. As to quaternary structure, homodimer.

It catalyses the reaction (2R)-2-phosphoglycerate = (2R)-3-phosphoglycerate. It functions in the pathway carbohydrate degradation; glycolysis; pyruvate from D-glyceraldehyde 3-phosphate: step 3/5. Catalyzes the interconversion of 2-phosphoglycerate and 3-phosphoglycerate. The sequence is that of 2,3-bisphosphoglycerate-dependent phosphoglycerate mutase from Maricaulis maris (strain MCS10) (Caulobacter maris).